Here is a 476-residue protein sequence, read N- to C-terminus: Probable pectin lyase F (476 aa).

The first 20 residues, 1-20 (MTLLRHLLTATALLGASVQA), serve as a signal peptide directing secretion. C84 and C108 are joined by a disulfide. N-linked (GlcNAc...) asparagine glycosylation is found at N103 and N131. R258 is a catalytic residue. N277 and N318 each carry an N-linked (GlcNAc...) asparagine glycan. Residues C325 and C333 are joined by a disulfide bond. N-linked (GlcNAc...) asparagine glycosylation occurs at N385. The segment at 412–476 (FVPAYSEAGP…HHHQGHGRGY (65 aa)) is disordered. A compositionally biased stretch (polar residues) spans 426–453 (VPTQPSWSWRTVTNGPAPTGAPSDSPSA). Residues 465 to 476 (NKHHHQGHGRGY) are compositionally biased toward basic residues.

It belongs to the polysaccharide lyase 1 family.

The protein localises to the secreted. It carries out the reaction Eliminative cleavage of (1-&gt;4)-alpha-D-galacturonan methyl ester to give oligosaccharides with 4-deoxy-6-O-methyl-alpha-D-galact-4-enuronosyl groups at their non-reducing ends.. Functionally, pectinolytic enzymes consist of four classes of enzymes: pectin lyase, polygalacturonase, pectin methylesterase and rhamnogalacturonase. Among pectinolytic enzymes, pectin lyase is the most important in depolymerization of pectin, since it cleaves internal glycosidic bonds of highly methylated pectins. This chain is Probable pectin lyase F (pelF), found in Aspergillus niger (strain ATCC MYA-4892 / CBS 513.88 / FGSC A1513).